The chain runs to 81 residues: MKIESISPVQPSQDAGAEAVGHFEGRSVTRAAVRGEDRSSVAGLARWLARNVAGDPRSEQALQRLADGDGTPLEARTVRRR.

The tract at residues 55–81 (DPRSEQALQRLADGDGTPLEARTVRRR) is disordered.

As to quaternary structure, interacts with ExsC.

The protein resides in the cytoplasm. It is found in the secreted. In terms of biological role, acts as a negative regulator of the type III secretion regulon (T3SS) expression. In the absence of inducing signals such as low Ca(2+) or host cell contact, the T3SS/injectisome is expressed at a low basal level and exists in a quiescent state due to ExsA sequestration by ExsD. ExsE binding to ExsC disrupts the complex between ExsC and ExsD, thereby allowing free ExsD to bind ExsA. Upon inducing signal, ExsE is secreted allowing ExsC to bind ExsD. In turn, ExsD cannot bind ExsA and prevent ExsA-mediated transcriptional activation of the type III secretion system. The chain is Type III secretion regulatory protein ExsE (exsE) from Pseudomonas aeruginosa (strain ATCC 15692 / DSM 22644 / CIP 104116 / JCM 14847 / LMG 12228 / 1C / PRS 101 / PAO1).